Consider the following 108-residue polypeptide: uncharacterized protein (108 aa).

Positions Glu-56–His-108 are disordered. Over residues Gly-73–Gln-89 the composition is skewed to polar residues.

This is an uncharacterized protein from Homo sapiens (Human).